Consider the following 487-residue polypeptide: NADH-quinone oxidoreductase subunit N (487 aa).

13 helical membrane-spanning segments follow: residues 7–27 (LTLI…ILIT), 37–57 (LVSI…APAL), 81–101 (FAKI…PAFF), 112–132 (PVLV…GDLI), 166–186 (FVLG…VYGF), 207–227 (ALFG…AVPF), 237–257 (GAPT…AVAL), 276–296 (IVIF…IGQT), 307–327 (INNV…GLSA), 329–349 (LTYL…LLML), 373–393 (LAWC…LLGF), 407–427 (DMVL…FYYI), and 452–472 (VLLI…TGWL).

Belongs to the complex I subunit 2 family. In terms of assembly, NDH-1 is composed of 14 different subunits. Subunits NuoA, H, J, K, L, M, N constitute the membrane sector of the complex.

It is found in the cell inner membrane. The catalysed reaction is a quinone + NADH + 5 H(+)(in) = a quinol + NAD(+) + 4 H(+)(out). In terms of biological role, NDH-1 shuttles electrons from NADH, via FMN and iron-sulfur (Fe-S) centers, to quinones in the respiratory chain. The immediate electron acceptor for the enzyme in this species is believed to be ubiquinone. Couples the redox reaction to proton translocation (for every two electrons transferred, four hydrogen ions are translocated across the cytoplasmic membrane), and thus conserves the redox energy in a proton gradient. This is NADH-quinone oxidoreductase subunit N from Erythrobacter litoralis (strain HTCC2594).